We begin with the raw amino-acid sequence, 349 residues long: tRNA (guanine(26)-N(2))-dimethyltransferase (349 aa).

Positions 1–343 constitute a Trm1 methyltransferase domain; that stretch reads MEVEEGRARV…ADRDVVVKIL (343 aa). S-adenosyl-L-methionine is bound by residues Arg25, Arg50, Asp66, Asp92, and Ala93.

Belongs to the class I-like SAM-binding methyltransferase superfamily. Trm1 family.

The catalysed reaction is guanosine(26) in tRNA + 2 S-adenosyl-L-methionine = N(2)-dimethylguanosine(26) in tRNA + 2 S-adenosyl-L-homocysteine + 2 H(+). Functionally, dimethylates a single guanine residue at position 26 of a number of tRNAs using S-adenosyl-L-methionine as donor of the methyl groups. This is tRNA (guanine(26)-N(2))-dimethyltransferase from Archaeoglobus fulgidus (strain ATCC 49558 / DSM 4304 / JCM 9628 / NBRC 100126 / VC-16).